Here is a 321-residue protein sequence, read N- to C-terminus: Glucokinase (321 aa).

ATP is bound at residue 8 to 13 (GDVGGT).

It belongs to the bacterial glucokinase family.

The protein resides in the cytoplasm. The enzyme catalyses D-glucose + ATP = D-glucose 6-phosphate + ADP + H(+). The sequence is that of Glucokinase from Shigella dysenteriae serotype 1 (strain Sd197).